Here is a 203-residue protein sequence, read N- to C-terminus: MQFFIIGTDTNVGKTIVSSWLCLHTAYDYFKMIQTGSINGTDSDILKKLTYSKIHKEAYCYKEPLSPHLAAKLEQDEININNIILPNASNLVIEGAGGLLVPINQQYLLLDIISYLMLPVILVTHSRLGTINHTLLTLQALKSKGIEVVGVIVNGKPNQDNCDAITWYGKTTILAQFPFLSTITKTTLRNIPLTQELKQLFIV.

11-16 contacts ATP; the sequence is NVGKTI. Thr15 lines the Mg(2+) pocket. The active site involves Lys31. Thr35 is a binding site for substrate. ATP-binding positions include Asp42 and 94-97; that span reads EGAG. 2 residues coordinate Mg(2+): Asp42 and Glu94.

The protein belongs to the dethiobiotin synthetase family. As to quaternary structure, homodimer. Requires Mg(2+) as cofactor.

The protein localises to the cytoplasm. It carries out the reaction (7R,8S)-7,8-diammoniononanoate + CO2 + ATP = (4R,5S)-dethiobiotin + ADP + phosphate + 3 H(+). The protein operates within cofactor biosynthesis; biotin biosynthesis; biotin from 7,8-diaminononanoate: step 1/2. Catalyzes a mechanistically unusual reaction, the ATP-dependent insertion of CO2 between the N7 and N8 nitrogen atoms of 7,8-diaminopelargonic acid (DAPA, also called 7,8-diammoniononanoate) to form a ureido ring. In Lawsonia intracellularis (strain PHE/MN1-00), this protein is ATP-dependent dethiobiotin synthetase BioD.